The sequence spans 199 residues: UPF0637 protein LVIS_1261 (199 aa).

Belongs to the UPF0637 family.

The sequence is that of UPF0637 protein LVIS_1261 from Levilactobacillus brevis (strain ATCC 367 / BCRC 12310 / CIP 105137 / JCM 1170 / LMG 11437 / NCIMB 947 / NCTC 947) (Lactobacillus brevis).